The following is a 115-amino-acid chain: Large ribosomal subunit protein bL35m (115 aa).

The protein belongs to the bacterial ribosomal protein bL35 family.

The protein localises to the mitochondrion. The sequence is that of Large ribosomal subunit protein bL35m from Saccharomyces cerevisiae (strain YJM789) (Baker's yeast).